A 905-amino-acid polypeptide reads, in one-letter code: Core protein VP3 (905 aa).

The protein belongs to the orbivirus VP3 family.

Its subcellular location is the virion. In terms of biological role, the VP3 protein is one of the five proteins (with VP1, VP4, VP6 and VP7) which form the inner capsid of the virus. The polypeptide is Core protein VP3 (Segment-3) (African horse sickness virus 6 (AHSV-6)).